The chain runs to 855 residues: Discoidin domain-containing receptor 2 (855 aa).

The N-terminal stretch at 1 to 21 (MILIPRMLLVLFLLLPILSSA) is a signal peptide. At 22–399 (KAQVNPAICR…MLKVDDSNTR (378 aa)) the chain is on the extracellular side. The F5/8 type C domain maps to 30–185 (CRYPLGMSGG…VCMRVELYGC (156 aa)). 2 cysteine pairs are disulfide-bonded: Cys30-Cys185 and Cys73-Cys177. N-linked (GlcNAc...) asparagine glycans are attached at residues Asn121, Asn213, Asn261, Asn280, and Asn372. Residues 400–421 (ILIGCLVAIIFILLAIIVIILW) form a helical membrane-spanning segment. Residues 422–855 (RQFWQKMLEK…HLLLLQQGDE (434 aa)) are Cytoplasmic-facing. The segment at 452-471 (SMFNNNRSSSPSEQGSNSTY) is disordered. Tyr471 carries the post-translational modification Phosphotyrosine; by SRC and autocatalysis. The Protein kinase domain occupies 563-849 (LTFKEKLGEG…PSFQEIHLLL (287 aa)). Residues 569–577 (LGEGQFGEV) and Lys608 each bind ATP. Catalysis depends on Asp710, which acts as the Proton acceptor. Phosphotyrosine; by SRC and autocatalysis occurs at positions 736, 740, and 741.

It belongs to the protein kinase superfamily. Tyr protein kinase family. Insulin receptor subfamily. Binds hydroxyproline-rich sequence motifs in fibrillar, glycosylated collagen, such as the GQOGVMGFO motif, where O stands for hydroxyproline. Interacts with SRC. Interacts (tyrosine phosphorylated) with SHC1. N-glycosylated. Post-translationally, tyrosine phosphorylated in response to collagen binding. Phosphorylated by SRC; this is required for activation and subsequent autophosphorylation on additional tyrosine residues. In terms of tissue distribution, detected in osteocytes, osteoblastic cells in subchondral bone, bone lining cells, tibia and cartilage (at protein level). Detected at high levels in heart and lung, and at low levels in brain, placenta, liver, skeletal muscle, pancreas, and kidney.

It localises to the cell membrane. It catalyses the reaction L-tyrosyl-[protein] + ATP = O-phospho-L-tyrosyl-[protein] + ADP + H(+). With respect to regulation, present in an inactive state in the absence of collagen binding and phosphorylation by SRC. Tyrosine phosphorylation enhances the affinity for ATP and the catalytic activity. In terms of biological role, tyrosine kinase involved in the regulation of tissues remodeling. It functions as a cell surface receptor for fibrillar collagen and regulates cell differentiation, remodeling of the extracellular matrix, cell migration and cell proliferation. Required for normal bone development. Regulates osteoblast differentiation and chondrocyte maturation via a signaling pathway that involves MAP kinases and leads to the activation of the transcription factor RUNX2. Regulates remodeling of the extracellular matrix by up-regulation of the collagenases MMP1, MMP2 and MMP13, and thereby facilitates cell migration and tumor cell invasion. Promotes fibroblast migration and proliferation, and thereby contributes to cutaneous wound healing. This is Discoidin domain-containing receptor 2 (DDR2) from Homo sapiens (Human).